Consider the following 360-residue polypeptide: Peptide chain release factor 1 (360 aa).

Q235 carries the N5-methylglutamine modification. A disordered region spans residues A284–P313.

It belongs to the prokaryotic/mitochondrial release factor family. In terms of processing, methylated by PrmC. Methylation increases the termination efficiency of RF1.

The protein resides in the cytoplasm. Its function is as follows. Peptide chain release factor 1 directs the termination of translation in response to the peptide chain termination codons UAG and UAA. This chain is Peptide chain release factor 1, found in Salmonella schwarzengrund (strain CVM19633).